Consider the following 546-residue polypeptide: MVSSSVSILGTSAKASTSLSRKDEIKLTPETREASLDIPYKPIIAYWTVMGLCLMIAFGGFIFGWDTGTISGFINQTDFKRRFGELQRDGSFQLSDVRTGLIVGIFNIGCALGGLTLGRLGDIYGRKIGLMCVILVYVVGIVIQIASSDKWYQYFIGRIVSGMGVGGVAVLSPTLISEISPKHLRGTCVSFYQLMITLGIFLGYCTNYGTKKYSNSIQWRVPLGLCFAWAIFMVIGMVMVPESPRYLVEKGKYEEARRSLAKSNKVTVTDPGVVFEFDTIVANMELERAVGNASWHELFSNKGAILPRVIMGIVIQSLQQLTGCNYFFYYGTTIFNAVGMQDSFETSIVLGAVNFASTFVALYIVDKFGRRKCLLWGSASMAICFVIFATVGVTRLWPQGKDQPSSQSAGNVMIVFTCFFIFSFAITWAPIAYVIVAETYPLRVKNRAMAIAVGANWMWGFLIGFFTPFITRSIGFSYGYVFMGCLIFSYFYVFFFVCETKGLTLEEVNEMYEERIKPWKSGGWIPSSRRTPQPTSSTPLVIVDSK.

Topologically, residues 1-44 (MVSSSVSILGTSAKASTSLSRKDEIKLTPETREASLDIPYKPII) are cytoplasmic. A helical transmembrane segment spans residues 45–65 (AYWTVMGLCLMIAFGGFIFGW). Residues 66–100 (DTGTISGFINQTDFKRRFGELQRDGSFQLSDVRTG) are Extracellular-facing. Residue N75 is glycosylated (N-linked (GlcNAc...) asparagine). The helical transmembrane segment at 101 to 121 (LIVGIFNIGCALGGLTLGRLG) threads the bilayer. Residues 122 to 127 (DIYGRK) are Cytoplasmic-facing. The helical transmembrane segment at 128–148 (IGLMCVILVYVVGIVIQIASS) threads the bilayer. Over 149–158 (DKWYQYFIGR) the chain is Extracellular. The chain crosses the membrane as a helical span at residues 159–179 (IVSGMGVGGVAVLSPTLISEI). Residues 180–185 (SPKHLR) are Cytoplasmic-facing. Residues 186–206 (GTCVSFYQLMITLGIFLGYCT) traverse the membrane as a helical segment. Over 207-220 (NYGTKKYSNSIQWR) the chain is Extracellular. The helical transmembrane segment at 221–241 (VPLGLCFAWAIFMVIGMVMVP) threads the bilayer. Residues 242-324 (ESPRYLVEKG…IQSLQQLTGC (83 aa)) lie on the Cytoplasmic side of the membrane. A helical membrane pass occupies residues 325-341 (NYFFYYGTTIFNAVGMQ). The Extracellular portion of the chain corresponds to 342–347 (DSFETS). A helical membrane pass occupies residues 348–365 (IVLGAVNFASTFVALYIV). Over 366–372 (DKFGRRK) the chain is Cytoplasmic. A helical membrane pass occupies residues 373-393 (CLLWGSASMAICFVIFATVGV). Over 394–415 (TRLWPQGKDQPSSQSAGNVMIV) the chain is Extracellular. The chain crosses the membrane as a helical span at residues 416-436 (FTCFFIFSFAITWAPIAYVIV). The Cytoplasmic segment spans residues 437–453 (AETYPLRVKNRAMAIAV). The chain crosses the membrane as a helical span at residues 454–474 (GANWMWGFLIGFFTPFITRSI). A topological domain (extracellular) is located at residue G475. Residues 476–496 (FSYGYVFMGCLIFSYFYVFFF) form a helical membrane-spanning segment. At 497–546 (VCETKGLTLEEVNEMYEERIKPWKSGGWIPSSRRTPQPTSSTPLVIVDSK) the chain is on the cytoplasmic side.

It belongs to the major facilitator superfamily. Sugar transporter (TC 2.A.1.1) family.

It is found in the membrane. Functionally, probable glucose transporter. The chain is Hexose transporter HXT10 (HXT10) from Saccharomyces cerevisiae (strain ATCC 204508 / S288c) (Baker's yeast).